Reading from the N-terminus, the 326-residue chain is DNA-directed RNA polymerase subunit alpha (326 aa).

Positions 1 to 231 (MQSNALLKPR…DQLSVFADLE (231 aa)) are alpha N-terminal domain (alpha-NTD). Residues 245-326 (IDPVLLRPVD…WPPAGLEKLG (82 aa)) form an alpha C-terminal domain (alpha-CTD) region.

Belongs to the RNA polymerase alpha chain family. In terms of assembly, homodimer. The RNAP catalytic core consists of 2 alpha, 1 beta, 1 beta' and 1 omega subunit. When a sigma factor is associated with the core the holoenzyme is formed, which can initiate transcription.

The catalysed reaction is RNA(n) + a ribonucleoside 5'-triphosphate = RNA(n+1) + diphosphate. Its function is as follows. DNA-dependent RNA polymerase catalyzes the transcription of DNA into RNA using the four ribonucleoside triphosphates as substrates. This is DNA-directed RNA polymerase subunit alpha from Azoarcus sp. (strain BH72).